The chain runs to 619 residues: Elongation factor 4 (619 aa).

Residues 17 to 198 (SVIRNFCIIA…RVVRAIPGPE (182 aa)) enclose the tr-type G domain. Residues 29–34 (DHGKST) and 145–148 (NKID) contribute to the GTP site.

It belongs to the TRAFAC class translation factor GTPase superfamily. Classic translation factor GTPase family. LepA subfamily.

It is found in the cell membrane. The enzyme catalyses GTP + H2O = GDP + phosphate + H(+). In terms of biological role, required for accurate and efficient protein synthesis under certain stress conditions. May act as a fidelity factor of the translation reaction, by catalyzing a one-codon backward translocation of tRNAs on improperly translocated ribosomes. Back-translocation proceeds from a post-translocation (POST) complex to a pre-translocation (PRE) complex, thus giving elongation factor G a second chance to translocate the tRNAs correctly. Binds to ribosomes in a GTP-dependent manner. The polypeptide is Elongation factor 4 (Micrococcus luteus (strain ATCC 4698 / DSM 20030 / JCM 1464 / CCM 169 / CCUG 5858 / IAM 1056 / NBRC 3333 / NCIMB 9278 / NCTC 2665 / VKM Ac-2230) (Micrococcus lysodeikticus)).